The chain runs to 423 residues: Adenylosuccinate synthetase (423 aa).

GTP contacts are provided by residues 11–17 and 39–41; these read GDEGKGK and GHT. Aspartate 12 acts as the Proton acceptor in catalysis. Residues aspartate 12 and glycine 39 each contribute to the Mg(2+) site. IMP-binding positions include 12 to 15, 37 to 40, threonine 129, arginine 143, asparagine 219, threonine 234, and arginine 298; these read DEGK and NAGH. Histidine 40 functions as the Proton donor in the catalytic mechanism. Substrate is bound at residue 294-300; the sequence is VTTGRRR. GTP contacts are provided by residues arginine 300, 326 to 328, and 411 to 413; these read KLD and GTG.

Belongs to the adenylosuccinate synthetase family. In terms of assembly, homodimer. The cofactor is Mg(2+).

The protein localises to the cytoplasm. It carries out the reaction IMP + L-aspartate + GTP = N(6)-(1,2-dicarboxyethyl)-AMP + GDP + phosphate + 2 H(+). Its pathway is purine metabolism; AMP biosynthesis via de novo pathway; AMP from IMP: step 1/2. Plays an important role in the de novo pathway and in the salvage pathway of purine nucleotide biosynthesis. Catalyzes the first committed step in the biosynthesis of AMP from IMP. In Penicillium rubens (strain ATCC 28089 / DSM 1075 / NRRL 1951 / Wisconsin 54-1255) (Penicillium chrysogenum), this protein is Adenylosuccinate synthetase.